The sequence spans 165 residues: Acireductone dioxygenase (165 aa).

Fe(2+) contacts are provided by H90, H92, E96, and H134. The Ni(2+) site is built by H90, H92, E96, and H134.

It belongs to the acireductone dioxygenase (ARD) family. In terms of assembly, monomer. Fe(2+) serves as cofactor. Ni(2+) is required as a cofactor.

It carries out the reaction 1,2-dihydroxy-5-(methylsulfanyl)pent-1-en-3-one + O2 = 3-(methylsulfanyl)propanoate + CO + formate + 2 H(+). It catalyses the reaction 1,2-dihydroxy-5-(methylsulfanyl)pent-1-en-3-one + O2 = 4-methylsulfanyl-2-oxobutanoate + formate + 2 H(+). It functions in the pathway amino-acid biosynthesis; L-methionine biosynthesis via salvage pathway; L-methionine from S-methyl-5-thio-alpha-D-ribose 1-phosphate: step 5/6. Catalyzes 2 different reactions between oxygen and the acireductone 1,2-dihydroxy-3-keto-5-methylthiopentene (DHK-MTPene) depending upon the metal bound in the active site. Fe-containing acireductone dioxygenase (Fe-ARD) produces formate and 2-keto-4-methylthiobutyrate (KMTB), the alpha-ketoacid precursor of methionine in the methionine recycle pathway. Ni-containing acireductone dioxygenase (Ni-ARD) produces methylthiopropionate, carbon monoxide and formate, and does not lie on the methionine recycle pathway. In Rhodopseudomonas palustris (strain ATCC BAA-98 / CGA009), this protein is Acireductone dioxygenase.